The chain runs to 301 residues: Putative S-adenosyl-L-methionine-dependent methyltransferase BCG_0775c (301 aa).

S-adenosyl-L-methionine-binding positions include Asp130 and Asp159–Leu160.

This sequence belongs to the UPF0677 family.

Exhibits S-adenosyl-L-methionine-dependent methyltransferase activity. This is Putative S-adenosyl-L-methionine-dependent methyltransferase BCG_0775c from Mycobacterium bovis (strain BCG / Pasteur 1173P2).